A 187-amino-acid chain; its full sequence is Protein TIFY 11b (187 aa).

In terms of domain architecture, Tify spans 68–103 (ATAPAAPLTIFYGGRMVVFEDFPADKAAEVMRMASS). The Jas signature appears at 121 to 145 (PIMRKASLQRFFAKRKDRLAATTPY). The short motif at 123-130 (MRKASLQR) is the Nuclear localization signal element. Residues 139-168 (LAATTPYARPSPAETKASEPEEKKTPTSWL) are disordered. Positions 154–163 (KASEPEEKKT) are enriched in basic and acidic residues.

It belongs to the TIFY/JAZ family. As to quaternary structure, interacts with COI1B in a coronatine-dependent manner. Coronatine is an analog of jasmonoyl isoleucine (JA-Ile). Post-translationally, ubiquitinated. Targeted for degradation by the SCF(COI1) E3 ubiquitin ligase-proteasome pathway during jasmonate signaling.

It localises to the nucleus. Functionally, repressor of jasmonate responses. This chain is Protein TIFY 11b, found in Oryza sativa subsp. japonica (Rice).